Here is a 291-residue protein sequence, read N- to C-terminus: MTSTNLEGTFPLIAKGKVRDIYQVDDNTLLFVATDRISAYDVIMSNGIPNKGKILTKLSEFWFDFLPIENHLIKGDIFQKYPQLEPYRNQLEGRSLLVRKLKLIPLEVIVRGYITGSGWKEYQKSKTVHGIPIGDVVESQQITPIFTPSTKAEQGEHDENITKEQADKIVGKELCDRIEKIAIDLYTKARDYAATKGIIIADTKFEFGLDGDNIVLVDEVLTPDSSRFWNAAKYEVGKSQDSYDKQFLRDWLTSNGVAGKDGVAMPEDIVTETKSKYVEAYENLTGDKWQE.

The protein belongs to the SAICAR synthetase family.

It catalyses the reaction 5-amino-1-(5-phospho-D-ribosyl)imidazole-4-carboxylate + L-aspartate + ATP = (2S)-2-[5-amino-1-(5-phospho-beta-D-ribosyl)imidazole-4-carboxamido]succinate + ADP + phosphate + 2 H(+). It functions in the pathway purine metabolism; IMP biosynthesis via de novo pathway; 5-amino-1-(5-phospho-D-ribosyl)imidazole-4-carboxamide from 5-amino-1-(5-phospho-D-ribosyl)imidazole-4-carboxylate: step 1/2. The polypeptide is Phosphoribosylaminoimidazole-succinocarboxamide synthase (ADE1) (Candida maltosa (Yeast)).